The sequence spans 89 residues: Small ribosomal subunit protein uS14A (89 aa).

This sequence belongs to the universal ribosomal protein uS14 family. As to quaternary structure, part of the 30S ribosomal subunit. Contacts proteins S3 and S10.

Functionally, binds 16S rRNA, required for the assembly of 30S particles and may also be responsible for determining the conformation of the 16S rRNA at the A site. The chain is Small ribosomal subunit protein uS14A from Streptococcus agalactiae serotype Ia (strain ATCC 27591 / A909 / CDC SS700).